Reading from the N-terminus, the 132-residue chain is MDSRTGENITAHQAENSVFIWEVPNPLYFKIMRVEDPAYTRTRIYHIQIRFNHNLRKALDLHKAFLNFQVWTTSIQASGTTYLNRFRLLVLLYLHRLGVIGINNVIRAVQFATNKSYVNTVLENHDIKYKFY.

This sequence belongs to the geminiviridae replication enhancer protein family. As to quaternary structure, homooligomer. Interacts with the replication-associated protein (REP). Interacts with host proliferating cell nuclear antigen (PCNA). Interacts with host retinoblastoma-related protein 1 (RBR1), and may thereby deregulate the host cell cycle. Oligomerization and interaction with PCNA are necessary for optimal replication enhancement.

Its function is as follows. Increases viral DNA accumulation. Enhances infectivity and symptom expression. The chain is Replication enhancer protein from Macroptilium lathyroides (Lima bean).